The primary structure comprises 364 residues: Serpentine receptor class epsilon-27 (364 aa).

Helical transmembrane passes span 31–51 (VIAS…VVSL), 64–84 (FIIL…GKLI), 125–145 (LLII…FGAV), 167–187 (IFIP…CSCL), 195–215 (IITI…VFFL), 257–277 (LIFS…TLLL), and 290–310 (NALF…IPAW).

The protein belongs to the nematode receptor-like protein sre family.

It is found in the membrane. The sequence is that of Serpentine receptor class epsilon-27 (sre-27) from Caenorhabditis elegans.